The primary structure comprises 596 residues: Bromodomain-containing protein 9 (596 aa).

Positions 1–10 are enriched in basic residues; that stretch reads MGKKHKKHKS. Disordered stretches follow at residues 1 to 31 and 49 to 119; these read MGKK…QYYV and EVTE…SEGE. A compositionally biased stretch (basic and acidic residues) spans 61–73; it reads SFYEDRSDHERER. Basic residues predominate over residues 74-84; that stretch reads HKEKKKKKKKK. A compositionally biased stretch (basic and acidic residues) spans 85-98; the sequence is SEKEKDKYLDEDER. The span at 99–109 shows a compositional bias: basic residues; sequence RRRKEEKKRKR. The 105-residue stretch at 148-252 folds into the Bromo domain; that stretch reads NESTPLQQLL…HTGFKMMSKQ (105 aa). The interval 226 to 228 is histone H4K5ac H4K8ac and histone H4K5bu H4K8bu binding; sequence TYN. Residues 537-547 show a composition bias toward basic and acidic residues; it reads DFHDVHNDRGG. The segment at 537–596 is disordered; the sequence is DFHDVHNDRGGSRPSSSSSVSNNSERDHHLGSPSRISVGEQQDIHDPYEFLQSPETENQN. A compositionally biased stretch (low complexity) spans 548–559; sequence SRPSSSSSVSNN.

In terms of assembly, binds acetylated histones H3 and H4. Binds butyrylated histone H4.

Its subcellular location is the nucleus. In terms of biological role, plays a role in chromatin remodeling and regulation of transcription. Acts as a chromatin reader that recognizes and binds acylated histones: binds histones that are acetylated and/or butyrylated. In Xenopus tropicalis (Western clawed frog), this protein is Bromodomain-containing protein 9 (brd9).